Here is a 130-residue protein sequence, read N- to C-terminus: Small ribosomal subunit protein uS8 (130 aa).

Belongs to the universal ribosomal protein uS8 family. As to quaternary structure, part of the 30S ribosomal subunit.

Its function is as follows. One of the primary rRNA binding proteins, it binds directly to 16S rRNA central domain where it helps coordinate assembly of the platform of the 30S subunit. The polypeptide is Small ribosomal subunit protein uS8 (Methanococcus vannielii (strain ATCC 35089 / DSM 1224 / JCM 13029 / OCM 148 / SB)).